The primary structure comprises 420 residues: 3-phosphoshikimate 1-carboxyvinyltransferase (420 aa).

Positions 1 to 24 (MTRTAKLTIIPPGRPLSGRAMPPG) are disordered. K26, S27, and R31 together coordinate 3-phosphoshikimate. A phosphoenolpyruvate-binding site is contributed by K26. The phosphoenolpyruvate site is built by G97 and R125. 3-phosphoshikimate-binding residues include S170, S171, Q172, D297, N320, and K324. Position 172 (Q172) interacts with phosphoenolpyruvate. D297 functions as the Proton acceptor in the catalytic mechanism. Residues R328, R375, and K400 each contribute to the phosphoenolpyruvate site.

It belongs to the EPSP synthase family. Monomer.

Its subcellular location is the cytoplasm. The enzyme catalyses 3-phosphoshikimate + phosphoenolpyruvate = 5-O-(1-carboxyvinyl)-3-phosphoshikimate + phosphate. It participates in metabolic intermediate biosynthesis; chorismate biosynthesis; chorismate from D-erythrose 4-phosphate and phosphoenolpyruvate: step 6/7. Its function is as follows. Catalyzes the transfer of the enolpyruvyl moiety of phosphoenolpyruvate (PEP) to the 5-hydroxyl of shikimate-3-phosphate (S3P) to produce enolpyruvyl shikimate-3-phosphate and inorganic phosphate. In Rhizobium etli (strain CIAT 652), this protein is 3-phosphoshikimate 1-carboxyvinyltransferase.